Here is a 466-residue protein sequence, read N- to C-terminus: Trigger factor (466 aa).

The PPIase FKBP-type domain occupies 162 to 243 (GDVVSIDLSA…VRSVKERELP (82 aa)). The tract at residues 428–466 (GNTIDTSEFFGKRVSAGEAEEAEPADEGAARAASDEATT) is disordered. Over residues 457 to 466 (ARAASDEATT) the composition is skewed to low complexity.

It belongs to the FKBP-type PPIase family. Tig subfamily.

Its subcellular location is the cytoplasm. The catalysed reaction is [protein]-peptidylproline (omega=180) = [protein]-peptidylproline (omega=0). Its function is as follows. Involved in protein export. Acts as a chaperone by maintaining the newly synthesized protein in an open conformation. Functions as a peptidyl-prolyl cis-trans isomerase. The protein is Trigger factor of Mycobacterium bovis (strain BCG / Tokyo 172 / ATCC 35737 / TMC 1019).